The chain runs to 476 residues: Ribulose bisphosphate carboxylase large chain (476 aa).

Asn124 and Thr174 together coordinate substrate. Lys176 acts as the Proton acceptor in catalysis. A substrate-binding site is contributed by Lys178. Mg(2+) contacts are provided by Lys202, Asp204, and Glu205. The residue at position 202 (Lys202) is an N6-carboxylysine. Residue His295 is the Proton acceptor of the active site. Residues Arg296, His328, and Ser380 each contribute to the substrate site.

The protein belongs to the RuBisCO large chain family. Type I subfamily. As to quaternary structure, heterohexadecamer of 8 large chains and 8 small chains; disulfide-linked. The disulfide link is formed within the large subunit homodimers. The cofactor is Mg(2+). The disulfide bond which can form in the large chain dimeric partners within the hexadecamer appears to be associated with oxidative stress and protein turnover.

The protein localises to the carboxysome. The catalysed reaction is 2 (2R)-3-phosphoglycerate + 2 H(+) = D-ribulose 1,5-bisphosphate + CO2 + H2O. It catalyses the reaction D-ribulose 1,5-bisphosphate + O2 = 2-phosphoglycolate + (2R)-3-phosphoglycerate + 2 H(+). In terms of biological role, ruBisCO catalyzes two reactions: the carboxylation of D-ribulose 1,5-bisphosphate, the primary event in carbon dioxide fixation, as well as the oxidative fragmentation of the pentose substrate in the photorespiration process. Both reactions occur simultaneously and in competition at the same active site. This chain is Ribulose bisphosphate carboxylase large chain, found in Nostoc punctiforme (strain ATCC 29133 / PCC 73102).